The primary structure comprises 245 residues: Carbohydrate deacetylase (245 aa).

Mg(2+) is bound by residues His61 and His122.

The protein belongs to the YdjC deacetylase family. Mg(2+) is required as a cofactor.

Functionally, probably catalyzes the deacetylation of acetylated carbohydrates an important step in the degradation of oligosaccharides. The chain is Carbohydrate deacetylase (celC) from Geobacillus stearothermophilus (Bacillus stearothermophilus).